A 317-amino-acid chain; its full sequence is 4-hydroxy-3-methylbut-2-enyl diphosphate reductase (317 aa).

C12 provides a ligand contact to [4Fe-4S] cluster. Residues H41 and H74 each contribute to the (2E)-4-hydroxy-3-methylbut-2-enyl diphosphate site. The dimethylallyl diphosphate site is built by H41 and H74. H41 and H74 together coordinate isopentenyl diphosphate. C97 contributes to the [4Fe-4S] cluster binding site. A (2E)-4-hydroxy-3-methylbut-2-enyl diphosphate-binding site is contributed by H125. H125 contacts dimethylallyl diphosphate. H125 lines the isopentenyl diphosphate pocket. E127 functions as the Proton donor in the catalytic mechanism. Residue T168 participates in (2E)-4-hydroxy-3-methylbut-2-enyl diphosphate binding. C198 lines the [4Fe-4S] cluster pocket. (2E)-4-hydroxy-3-methylbut-2-enyl diphosphate-binding residues include S226, S227, N228, and S270. Dimethylallyl diphosphate is bound by residues S226, S227, N228, and S270. Isopentenyl diphosphate contacts are provided by S226, S227, N228, and S270.

The protein belongs to the IspH family. Homodimer. [4Fe-4S] cluster is required as a cofactor.

It catalyses the reaction isopentenyl diphosphate + 2 oxidized [2Fe-2S]-[ferredoxin] + H2O = (2E)-4-hydroxy-3-methylbut-2-enyl diphosphate + 2 reduced [2Fe-2S]-[ferredoxin] + 2 H(+). The catalysed reaction is dimethylallyl diphosphate + 2 oxidized [2Fe-2S]-[ferredoxin] + H2O = (2E)-4-hydroxy-3-methylbut-2-enyl diphosphate + 2 reduced [2Fe-2S]-[ferredoxin] + 2 H(+). It participates in isoprenoid biosynthesis; dimethylallyl diphosphate biosynthesis; dimethylallyl diphosphate from (2E)-4-hydroxy-3-methylbutenyl diphosphate: step 1/1. The protein operates within isoprenoid biosynthesis; isopentenyl diphosphate biosynthesis via DXP pathway; isopentenyl diphosphate from 1-deoxy-D-xylulose 5-phosphate: step 6/6. Catalyzes the conversion of 1-hydroxy-2-methyl-2-(E)-butenyl 4-diphosphate (HMBPP) into a mixture of isopentenyl diphosphate (IPP) and dimethylallyl diphosphate (DMAPP). Acts in the terminal step of the DOXP/MEP pathway for isoprenoid precursor biosynthesis. The sequence is that of 4-hydroxy-3-methylbut-2-enyl diphosphate reductase from Serratia proteamaculans (strain 568).